A 500-amino-acid polypeptide reads, in one-letter code: Histidinol dehydrogenase homolog 1 (500 aa).

Positions 1–25 (MPPAGGIFHRPPTTRKSRRLTPRSA) are disordered. Residues 12–21 (PTTRKSRRLT) are compositionally biased toward basic residues. Zn(2+)-binding residues include Gln313 and His316. Residues Glu381 and His382 each act as proton acceptor in the active site. Zn(2+) contacts are provided by Asp415 and His475.

It belongs to the histidinol dehydrogenase family. The cofactor is Zn(2+).

This is Histidinol dehydrogenase homolog 1 from Mesorhizobium japonicum (strain LMG 29417 / CECT 9101 / MAFF 303099) (Mesorhizobium loti (strain MAFF 303099)).